We begin with the raw amino-acid sequence, 226 residues long: UPF0758 protein GWCH70_2550 (226 aa).

In terms of domain architecture, MPN spans 104 to 226 (VIRSPEDGAK…FVSLKEKGYV (123 aa)). Residues His-175, His-177, and Asp-188 each contribute to the Zn(2+) site. The short motif at 175 to 188 (HNHPSGDPTPSRED) is the JAMM motif element.

It belongs to the UPF0758 family.

The chain is UPF0758 protein GWCH70_2550 from Geobacillus sp. (strain WCH70).